Here is a 513-residue protein sequence, read N- to C-terminus: Ribonuclease Y (513 aa).

Residues 6–26 traverse the membrane as a helical segment; it reads YIIIAVVIIIICVILGLYIVD. Positions 203-288 constitute a KH domain; sequence TVHVVNLPND…EMVEKAKKEV (86 aa). Residues 329 to 422 form the HD domain; that stretch reads VLKHSIEVSH…VQAADAISAA (94 aa).

Belongs to the RNase Y family.

The protein localises to the cell membrane. In terms of biological role, endoribonuclease that initiates mRNA decay. In Clostridium botulinum (strain ATCC 19397 / Type A), this protein is Ribonuclease Y.